We begin with the raw amino-acid sequence, 558 residues long: Sinalpyl alcohol oxidase Nec3 (558 aa).

The signal sequence occupies residues methionine 1–alanine 28. Threonine 64–alanine 65 contributes to the FAD binding site. Asparagine 76 carries an N-linked (GlcNAc...) asparagine glycan. Residues glutamate 83–arginine 84, valine 131, serine 135, and asparagine 139–phenylalanine 142 each bind FAD. N-linked (GlcNAc...) asparagine glycosylation occurs at asparagine 180. Residue valine 247 coordinates FAD. 3 N-linked (GlcNAc...) asparagine glycosylation sites follow: asparagine 308, asparagine 386, and asparagine 473. A disulfide bridge connects residues cysteine 433 and cysteine 484. Residue tyrosine 492 to histidine 493 coordinates FAD. Residue histidine 493 is the Proton donor of the active site. Asparagine 531 (proton acceptor) is an active-site residue. Proline 532–glutamine 533 is a binding site for FAD.

This sequence belongs to the GMC oxidoreductase family. Monomer. FAD is required as a cofactor. Confined to nectaries.

The enzyme catalyses (E)-sinapyl alcohol + O2 = (E)-sinapaldehyde + H2O2. The protein operates within alkaloid biosynthesis. Functionally, involved in the production of blood-red nectar containing the alkaloid nesocodin and that serves as a visual attractant for pollinator visitation, including vertebrates such as Phelsuma geckos. The nectar is initially acidic and pale yellow, but slowly becomes alkaline before turning into red within 24 hours. Together with NEC1 and NEC2, facilitates the condensation of sinapaldehyde ((E)-3,5-dimethoxy-4-hydroxycinnamaldehyde) and proline to form nesocodin, a pigment with a stable imine bond. Catalyzes the conversion of sinapyl alcohol to sinapaldehyde. This is Sinalpyl alcohol oxidase Nec3 from Nesocodon mauritianus (Blue Mauritius bellflower).